A 305-amino-acid chain; its full sequence is Auxin-responsive protein IAA27 (305 aa).

The EAR-like (transcriptional repression) signature appears at 45–49; the sequence is LRLGL. 2 disordered regions span residues 96–119 and 155–180; these read TTATGDVGSGSGPRTSVVKDGKST and KNSMASSQSQKPGNNSETEEAEAKSG. Residues 155 to 170 show a composition bias toward polar residues; sequence KNSMASSQSQKPGNNS. The PB1 domain occupies 185-287; it reads CLYVKVSMEG…SCKKLRIMKS (103 aa).

This sequence belongs to the Aux/IAA family. Homodimers and heterodimers. Interacts with phytochrome A. Interacts with TPL.

The protein resides in the nucleus. Aux/IAA proteins are short-lived transcriptional factors that function as repressors of early auxin response genes at low auxin concentrations. Repression is thought to result from the interaction with auxin response factors (ARFs), proteins that bind to the auxin-responsive promoter element (AuxRE). Formation of heterodimers with ARF proteins may alter their ability to modulate early auxin response genes expression. The polypeptide is Auxin-responsive protein IAA27 (IAA27) (Arabidopsis thaliana (Mouse-ear cress)).